The chain runs to 352 residues: C-C chemokine receptor type 5 (352 aa).

Residues methionine 1–alanine 30 lie on the Extracellular side of the membrane. Tyrosine 3 carries the post-translational modification Sulfotyrosine. 2 O-linked (GalNAc...) serine glycosylation sites follow: serine 6 and serine 7. Residues tyrosine 10, tyrosine 14, and tyrosine 15 each carry the sulfotyrosine modification. Cystine bridges form between cysteine 20/cysteine 269 and cysteine 101/cysteine 178. A helical membrane pass occupies residues arginine 31–cysteine 58. At lysine 59 to tyrosine 68 the chain is on the cytoplasmic side. A helical membrane pass occupies residues leucine 69 to tyrosine 89. At alanine 90–glutamine 102 the chain is on the extracellular side. Residues leucine 103 to isoleucine 124 traverse the membrane as a helical segment. Over aspartate 125–threonine 141 the chain is Cytoplasmic. A helical transmembrane segment spans residues valine 142–phenylalanine 166. The Extracellular segment spans residues threonine 167–isoleucine 198. A helical membrane pass occupies residues valine 199–leucine 218. Topologically, residues lysine 219–arginine 235 are cytoplasmic. Residues leucine 236–phenylalanine 260 form a helical membrane-spanning segment. Residues glutamine 261 to glutamine 277 are Extracellular-facing. Residues alanine 278–glycine 301 traverse the membrane as a helical segment. Residues glutamate 302–leucine 352 are Cytoplasmic-facing. Residues cysteine 321, cysteine 323, and cysteine 324 are each lipidated (S-palmitoyl cysteine). 4 positions are modified to phosphoserine; by BARK1: serine 336, serine 337, serine 342, and serine 349.

The protein belongs to the G-protein coupled receptor 1 family. In terms of assembly, interacts with PRAF2. Efficient ligand binding to CCL3/MIP-1alpha and CCL4/MIP-1beta requires sulfation, O-glycosylation and sialic acid modifications. Glycosylation on Ser-6 is required for efficient binding of CCL4. Interacts with GRK2. Interacts with ARRB1 and ARRB2. Interacts with CNIH4. Interacts with S100A4; this interaction stimulates T-lymphocyte chemotaxis. Post-translationally, sulfated on at least 2 of the N-terminal tyrosines. Sulfation is required for efficient binding of the chemokines, CCL3 and CCL4. Palmitoylation in the C-terminal is important for cell surface expression. In terms of processing, phosphorylation on serine residues in the C-terminal is stimulated by binding CC chemokines especially by APO-RANTES. Post-translationally, O-glycosylated, but not N-glycosylated. Ser-6 appears to be the major site even if Ser-7 may be also O-glycosylated. Also sialylated glycans present which contribute to chemokine binding. Thr-16 and Ser-17 may also be glycosylated and, if so, with small moieties such as a T-antigen.

Its subcellular location is the cell membrane. Its function is as follows. Receptor for a number of inflammatory CC-chemokines including CCL3/MIP-1-alpha, CCL4/MIP-1-beta and RANTES and subsequently transduces a signal by increasing the intracellular calcium ion level. May play a role in the control of granulocytic lineage proliferation or differentiation. Participates in T-lymphocyte migration to the infection site by acting as a chemotactic receptor. This chain is C-C chemokine receptor type 5 (CCR5), found in Hylobates moloch (Silvery gibbon).